The primary structure comprises 145 residues: AP-2 complex subunit sigma (145 aa).

This sequence belongs to the adaptor complexes small subunit family. In terms of assembly, adaptor protein complex 2 (AP-2) is a heterotetramer composed of two large adaptins (alpha-type subunit apl3 and beta-type subunit apl1), a medium chain (mu-type subunit apm4) and a small adaptin (sigma-type subunit aps2).

It is found in the cell membrane. The protein localises to the membrane. Its subcellular location is the coated pit. In terms of biological role, component of the adaptor complexes which link clathrin to receptors in coated vesicles. Clathrin-associated protein complexes are believed to interact with the cytoplasmic tails of membrane proteins, leading to their selection and concentration. The chain is AP-2 complex subunit sigma (aps2) from Emericella nidulans (strain FGSC A4 / ATCC 38163 / CBS 112.46 / NRRL 194 / M139) (Aspergillus nidulans).